The primary structure comprises 151 residues: Cytochrome c-type biogenesis protein CcmE (151 aa).

The Cytoplasmic portion of the chain corresponds to 1 to 8 (MNPLRRKR). The chain crosses the membrane as a helical; Signal-anchor for type II membrane protein span at residues 9–29 (LLIILAILVGVGIAVGLALSA). The Periplasmic portion of the chain corresponds to 30–151 (LQQNINLFYT…QSAPTPAKEG (122 aa)). Residues His124 and Tyr128 each coordinate heme.

Belongs to the CcmE/CycJ family.

The protein localises to the cell inner membrane. Its function is as follows. Heme chaperone required for the biogenesis of c-type cytochromes. Transiently binds heme delivered by CcmC and transfers the heme to apo-cytochromes in a process facilitated by CcmF and CcmH. The protein is Cytochrome c-type biogenesis protein CcmE of Pseudomonas fluorescens (strain SBW25).